A 553-amino-acid chain; its full sequence is ATP synthase F(1) complex subunit alpha, mitochondrial (553 aa).

Residues 1–43 (MLSVRVAAAVARALPRRAGLVSKNALGSSFIAARNLHASNSRL) constitute a mitochondrion transit peptide. Glutamine 44 is modified (pyrrolidone carboxylic acid). A phosphoserine mark is found at serine 53 and serine 65. Residue serine 76 is modified to Phosphoserine; alternate. O-linked (GlcNAc) serine; alternate glycosylation occurs at serine 76. The residue at position 106 (serine 106) is a Phosphoserine. 3 positions are modified to N6-acetyllysine: lysine 123, lysine 126, and lysine 132. Threonine 134 is modified (phosphothreonine). An N6-acetyllysine; alternate modification is found at lysine 161. Lysine 161 bears the N6-succinyllysine; alternate mark. Position 166 is a phosphoserine (serine 166). N6-acetyllysine; alternate is present on lysine 167. N6-succinyllysine; alternate is present on lysine 167. At serine 184 the chain carries Phosphoserine. At arginine 204 the chain carries Omega-N-methylarginine. Residues glutamine 215, glycine 217, lysine 218, threonine 219, and serine 220 each contribute to the ATP site. Position 219 (threonine 219) interacts with Mg(2+). N6-acetyllysine; alternate is present on residues lysine 230 and lysine 239. Lysine 230 and lysine 239 each carry N6-succinyllysine; alternate. Lysine 240 carries the post-translational modification N6-acetyllysine. An N6-acetyllysine; alternate mark is found at lysine 261 and lysine 305. Lysine 261 and lysine 305 each carry N6-succinyllysine; alternate. Aspartate 312 contributes to the Mg(2+) binding site. N6-acetyllysine; alternate is present on lysine 427. Lysine 427 carries the post-translational modification N6-succinyllysine; alternate. N6-acetyllysine is present on lysine 434. Residues glutamine 473 and glutamine 475 each coordinate ATP. An N6-acetyllysine; alternate mark is found at lysine 498, lysine 506, lysine 531, and lysine 539. Residues lysine 498, lysine 506, lysine 531, and lysine 539 each carry the N6-succinyllysine; alternate modification. Lysine 541 is subject to N6-acetyllysine.

This sequence belongs to the ATPase alpha/beta chains family. Homotrimer. Component of the ATP synthase complex composed at least of ATP5F1A/subunit alpha, ATP5F1B/subunit beta, ATP5MC1/subunit c (homooctomer), MT-ATP6/subunit a, MT-ATP8/subunit 8, ATP5ME/subunit e, ATP5MF/subunit f, ATP5MG/subunit g, ATP5MK/subunit k, ATP5MJ/subunit j, ATP5F1C/subunit gamma, ATP5F1D/subunit delta, ATP5F1E/subunit epsilon, ATP5PF/subunit F6, ATP5PB/subunit b, ATP5PD/subunit d, ATP5PO/subunit OSCP. ATP synthase complex consists of a soluble F(1) head domain (subunits alpha(3) and beta(3)) - the catalytic core - and a membrane F(0) domain - the membrane proton channel (subunits c, a, 8, e, f, g, k and j). These two domains are linked by a central stalk (subunits gamma, delta, and epsilon) rotating inside the F1 region and a stationary peripheral stalk (subunits F6, b, d, and OSCP). Interacts with ATPAF2. Interacts with HRG; the interaction occurs on the surface of T-cells and alters the cell morphology when associated with concanavalin (in vitro). Interacts with PLG (angiostatin peptide); the interaction inhibits most of the angiogenic properties of angiostatin. Interacts with BLOC1S1. Interacts with BCL2L1 isoform BCL-X(L); the interaction mediates the association of BCL2L1 isoform BCL-X(L) with the mitochondrial membrane F(1)F(0) ATP synthase and enhances neurons metabolic efficiency. Interacts with CLN5 and PPT1. Interacts with S100A1; this interaction increases F1-ATPase activity. Interacts with ABCB7; this interaction allows the regulation of cellular iron homeostasis and cellular reactive oxygen species (ROS) levels in cardiomyocytes. Acetylated on lysine residues. BLOC1S1 is required for acetylation. As to expression, heart muscle (at protein level). Heart and liver.

It localises to the mitochondrion inner membrane. The protein localises to the cell membrane. Its function is as follows. Subunit alpha, of the mitochondrial membrane ATP synthase complex (F(1)F(0) ATP synthase or Complex V) that produces ATP from ADP in the presence of a proton gradient across the membrane which is generated by electron transport complexes of the respiratory chain. ATP synthase complex consist of a soluble F(1) head domain - the catalytic core - and a membrane F(1) domain - the membrane proton channel. These two domains are linked by a central stalk rotating inside the F(1) region and a stationary peripheral stalk. During catalysis, ATP synthesis in the catalytic domain of F(1) is coupled via a rotary mechanism of the central stalk subunits to proton translocation. In vivo, can only synthesize ATP although its ATP hydrolase activity can be activated artificially in vitro. With the catalytic subunit beta (ATP5F1B), forms the catalytic core in the F(1) domain. Subunit alpha does not bear the catalytic high-affinity ATP-binding sites. The protein is ATP synthase F(1) complex subunit alpha, mitochondrial of Bos taurus (Bovine).